We begin with the raw amino-acid sequence, 226 residues long: Glutathione peroxidase 3 (226 aa).

Positions 1–24 (MARLLQASCLLSLLLAGFVPQSRG) are cleaved as a signal peptide. Sec73 is a catalytic residue. Position 73 (Sec73) is a non-standard amino acid, selenocysteine.

It belongs to the glutathione peroxidase family. As to quaternary structure, homotetramer. As to expression, secreted in plasma.

Its subcellular location is the secreted. It catalyses the reaction 2 glutathione + H2O2 = glutathione disulfide + 2 H2O. The enzyme catalyses tert-butyl hydroperoxide + 2 glutathione = tert-butanol + glutathione disulfide + H2O. Protects cells and enzymes from oxidative damage, by catalyzing the reduction of hydrogen peroxide, lipid peroxides and organic hydroperoxide, by glutathione. The chain is Glutathione peroxidase 3 from Pongo pygmaeus (Bornean orangutan).